We begin with the raw amino-acid sequence, 354 residues long: Methionine aminotransferase BCAT4 (354 aa).

Lys198 is modified (N6-(pyridoxal phosphate)lysine).

This sequence belongs to the class-IV pyridoxal-phosphate-dependent aminotransferase family. It depends on pyridoxal 5'-phosphate as a cofactor. In terms of tissue distribution, mostly expressed in phloem.

It is found in the cytoplasm. It carries out the reaction a 2-oxocarboxylate + L-methionine = 4-methylsulfanyl-2-oxobutanoate + an L-alpha-amino acid. In terms of biological role, converts 2-oxo acids to branched-chain amino acids. Shows activity with L-Leu, L-Ile and L-Val as amino donors and alpha-keto-glutarate as an amino acceptor, but no activity for D-isomers of Leu, Ile, Val, Asp, Glu or Ala. Acts on methionine and its derivatives and the corresponding 2-oxo acids. Catalyzes the initial deamination of methionine to 4-methylthio-2-oxobutyrate as well as the transamination of other typical intermediates of the methionine chain elongation pathway. This Arabidopsis thaliana (Mouse-ear cress) protein is Methionine aminotransferase BCAT4 (BCAT4).